A 543-amino-acid chain; its full sequence is Sensor histidine kinase DcuS (543 aa).

Over 1-20 the chain is Cytoplasmic; the sequence is MRHSLPYRMLRKRPMKLSTT. The chain crosses the membrane as a helical span at residues 21–41; the sequence is VILMVSAVLFSVLLVVHLIYF. Residues 42–181 are Periplasmic-facing; it reads SQISDMTRDG…VTQQINDSRW (140 aa). (R)-malate-binding positions include 107–110, Lys-121, 140–142, and Arg-147; these read RYSH and GFL. Residues 182–202 traverse the membrane as a helical segment; the sequence is SIIWSVLFGMLVGLIGTCILV. Residues 203 to 543 are Cytoplasmic-facing; the sequence is KVLKKILFGL…IPWDGERSNR (341 aa). Positions 212-323 constitute a PAS domain; it reads LEPYEISTLF…IIGAISTFRD (112 aa). Residues 346-538 enclose the Histidine kinase domain; that stretch reads ERSHEFMNKL…QFFVQIPWDG (193 aa). A Phosphohistidine; by autocatalysis modification is found at His-349.

As to quaternary structure, homodimer. Post-translationally, autophosphorylated. The phosphoryl group is rapidly transferred to DcuR.

Its subcellular location is the cell inner membrane. It carries out the reaction ATP + protein L-histidine = ADP + protein N-phospho-L-histidine.. Member of the two-component regulatory system DcuR/DcuS. Involved in the C4-dicarboxylate-stimulated regulation of the genes encoding the anaerobic fumarate respiratory system (frdABCD; nuoAN; dcuB; sdhCDAB; etc.). Weakly regulates the aerobic C4-dicarboxylate transporter dctA. Activates DcuR by phosphorylation. The protein is Sensor histidine kinase DcuS (dcuS) of Escherichia coli O157:H7.